Consider the following 600-residue polypeptide: Brain-enriched guanylate kinase-associated protein (600 aa).

Met1 is subject to N-acetylmethionine. The residue at position 137 (Tyr137) is a Phosphotyrosine. The segment at 192–222 (PGSLSSRMSDASARDLGYRDGVEKSGPRPPY) is disordered. At Ser200 the chain carries Phosphoserine. Residues 203 to 217 (SARDLGYRDGVEKSG) show a composition bias toward basic and acidic residues. Phosphoserine is present on residues Ser229 and Ser246. Thr249 is subject to Phosphothreonine. Ser265 is subject to Phosphoserine. The disordered stretch occupies residues 298 to 317 (SSYSSFSATSEEKEHAQAGT). Ser372 bears the Phosphoserine mark. Arg380 carries the post-translational modification Asymmetric dimethylarginine. A phosphoserine mark is found at Ser463, Ser473, Ser483, Ser485, Ser508, Ser510, and Ser514. A disordered region spans residues 537-590 (GAGSSPEPEHGSRESLEPSSMEASPEMHPPTRLSPQQAFPRTGGSGLSRKDSLT). Positions 543–552 (EPEHGSRESL) are enriched in basic and acidic residues. Phosphoserine is present on residues Ser560 and Ser570.

As to quaternary structure, interacts with DLG4 and DLGAP1 and forms a ternary complex.

It localises to the cytoplasm. The protein resides in the membrane. May sustain the structure of the postsynaptic density (PSD). This chain is Brain-enriched guanylate kinase-associated protein (Begain), found in Mus musculus (Mouse).